The primary structure comprises 876 residues: MEVLREKVEEEEEAEREEAAERAERTEKLERVTKSAEVSREGTILSQDELRDLEGKLMAIEIPTQADHSVISQAPVDVTKLPPSYTTNSLKEEHLLLVADNFSRQYSHLCPDRVPLFLHPLNECNVPKFVSTTLRPTLMPYPELYNWDSCAQFVSDFLTMVPLVDPLKPPTHLYSSTTVLKCQKGNCFDFSTLLCSMLIGSGYDAYCVNGYGSLDLCLMDLTREVCPLTVKAKEIVKKKEKTVPKKYSIKPPRDLTSKFEQEQEEKRIQEIKDLEQRRLKEEEDRILEAEKAKPDPLHGLRVHSWVLVLAGKREVPESFFIDPLTARSYSTKDEHFLGIESLWNHKNYWINMQDCWNCCKDLIFDLGDPVRWEYMLLGTDKPHLSLTEEDEEGLDDDDDDVEDLGKEEEDKSFDMPSSWVSQIEITPEEFETRCPSGKKVIQYKKAQLEKWSPYLNNNGLVCRLTTYEDQQCTKVLEIKEWYQNREDMLELKHINKTTGLHVDYFKPGHPQALCVHSYKSMLPEMDRVMEFYKKIRVDGLVKREETPMTMTEYYEGRSDFLAYRHVNFGPRVKKLSQSSVESNPRPMVKITERFSRNPEKPADEDVAERLFLIVEERIQLRYHCRDDYITASKREFLRRMEVDSKGNKIIMTPEMCISYEVEPMEHTKKLLYQYETMNQLKNEEKLSRHQAWESELEVLEILKLREEEEEAHTLTISIYDTKRNEKSKEYREAMERVLHEEHLRQVEAQLDYLAPFLAQLPPGEKLTRWQAVRLKDECLSDFKQRLIDKANLIQARFEKETQELQKKQQWYQENQVTLTPEDENLYLSYCSQAMFRIRILEQRLNRHKELAPLKYLALEEKLYKDPRLIDFVKVFV.

2 coiled-coil regions span residues M1–T33 and K258–D295. The tract at residues M1 to R40 is disordered. Positions E17–R40 are enriched in basic and acidic residues. Residues S385–S412 form a disordered region. Acidic residues predominate over residues T387 to E407. Coiled coils occupy residues Q679–E710 and Q784–Q809.

It belongs to the DRC7 family. As to quaternary structure, component of the nexin-dynein regulatory complex (N-DRC). Interacts with TCTE1/DRC5. Interacts with DRC3 and GAS8/DRC4. In terms of tissue distribution, expressed in diplotene and pachytene spermytocytes, and in round and elongating spermatids (at protein level). Strongly expressed in spleen and testis, faintly expressed in kidney, ovary and thymus. Abundantly expressed in the testis and is weakly expressed in the brain, thymus, lung and ovary. Expressed in ciliated cells.

The protein localises to the cell projection. It is found in the cilium. It localises to the flagellum. Its subcellular location is the cytoplasm. The protein resides in the cytoskeleton. The protein localises to the cilium axoneme. It is found in the flagellum axoneme. Functionally, component of the nexin-dynein regulatory complex (N-DRC) a key regulator of ciliary/flagellar motility which maintains the alignment and integrity of the distal axoneme and regulates microtubule sliding in motile axonemes. Essential for male fertility, sperm head morphogenesis and sperm flagellum formation. Not required for ciliogenesis in the brain and trachea. The sequence is that of Dynein regulatory complex subunit 7 (Drc7) from Mus musculus (Mouse).